The following is a 356-amino-acid chain: S-adenosylmethionine:tRNA ribosyltransferase-isomerase (356 aa).

It belongs to the QueA family. Monomer.

Its subcellular location is the cytoplasm. It catalyses the reaction 7-aminomethyl-7-carbaguanosine(34) in tRNA + S-adenosyl-L-methionine = epoxyqueuosine(34) in tRNA + adenine + L-methionine + 2 H(+). It functions in the pathway tRNA modification; tRNA-queuosine biosynthesis. Functionally, transfers and isomerizes the ribose moiety from AdoMet to the 7-aminomethyl group of 7-deazaguanine (preQ1-tRNA) to give epoxyqueuosine (oQ-tRNA). This Escherichia coli O6:H1 (strain CFT073 / ATCC 700928 / UPEC) protein is S-adenosylmethionine:tRNA ribosyltransferase-isomerase.